The following is a 321-amino-acid chain: MNQTLNSSGTVESALNYSRGSTVHTAYLVLSSLAMFTCLCGMAGNSMVIWLLGFRMHRNPFCIYILNLAAADLLFLFSMASTLSLETQPLVNTTDKVHELMKRLMYFAYTVGLSLLTAISTQRCLSVLFPIWFKCHRPRHLSAWVCGLLWTLCLLMNGLTSSFCSKFLKFNEDRCFRVDMVQAALIMGVLTPVMTLSSLTLFVWVRRSSQQWRRQPTRLFVVVLASVLVFLICSLPLSIYWFVLYWLSLPPEMQVLCFSLSRLSSSVSSSANPVIYFLVGSRRSHRLPTRSLGTVLQQALREEPELEGGETPTVGTNEMGA.

At 1 to 33 (MNQTLNSSGTVESALNYSRGSTVHTAYLVLSSL) the chain is on the extracellular side. Residues Asn2, Asn6, and Asn16 are each glycosylated (N-linked (GlcNAc...) asparagine). A helical membrane pass occupies residues 34 to 54 (AMFTCLCGMAGNSMVIWLLGF). Residues 55 to 59 (RMHRN) are Cytoplasmic-facing. A helical membrane pass occupies residues 60–80 (PFCIYILNLAAADLLFLFSMA). Topologically, residues 81 to 112 (STLSLETQPLVNTTDKVHELMKRLMYFAYTVG) are extracellular. Residue Asn92 is glycosylated (N-linked (GlcNAc...) asparagine). A helical membrane pass occupies residues 113-133 (LSLLTAISTQRCLSVLFPIWF). The Cytoplasmic segment spans residues 134–142 (KCHRPRHLS). Residues 143 to 163 (AWVCGLLWTLCLLMNGLTSSF) traverse the membrane as a helical segment. The Extracellular portion of the chain corresponds to 164–184 (CSKFLKFNEDRCFRVDMVQAA). The chain crosses the membrane as a helical span at residues 185–205 (LIMGVLTPVMTLSSLTLFVWV). The Cytoplasmic segment spans residues 206-218 (RRSSQQWRRQPTR). Residues 219–239 (LFVVVLASVLVFLICSLPLSI) form a helical membrane-spanning segment. Topologically, residues 240 to 257 (YWFVLYWLSLPPEMQVLC) are extracellular. The chain crosses the membrane as a helical span at residues 258–280 (FSLSRLSSSVSSSANPVIYFLVG). Residues 281–321 (SRRSHRLPTRSLGTVLQQALREEPELEGGETPTVGTNEMGA) lie on the Cytoplasmic side of the membrane. The interval 302–321 (EEPELEGGETPTVGTNEMGA) is disordered.

It belongs to the G-protein coupled receptor 1 family. Mas subfamily.

The protein localises to the cell membrane. Functionally, may regulate nociceptor function and/or development, including the sensation or modulation of pain. Functions as a specific membrane receptor for beta-alanine. Beta-alanine at micromolar doses specifically evoked Ca(2+) influx in cells expressing the receptor. Beta-alanine decreases forskolin-stimulated cAMP production in cells expressing the receptor, suggesting that the receptor couples with G-protein G(q) and G(i). The chain is Mas-related G-protein coupled receptor member D (MRGPRD) from Homo sapiens (Human).